A 336-amino-acid chain; its full sequence is MEIIKTLGEFIIDRQKDYPDASGELTSLFSSIRLAAKILHREINKAGLADITGAAGDENVQGEQQQKLDVYANERFKNALAQRGVVCGIASEEEEQFVRFEETKNLGGKYVVLIDPLDGSSNIDVNVSVGTIFSVYRRVSPEGEHVTEEDFLQPGHKQIAAGYIIYGSSTMLVYTTGNGVNGFTYDPTIGVFCLSHPNLRIPEDGTIYSINEGNYIHFPEGVKKYIKFCQEEDDATQRPYTSRYIGSLVSDFHRNLIKGGIYLYPTSSRYPEGKLRLLYECNPMAFLIEQAGGKAIANPGQRILDIEPTKLHQRCPLFVGSPKMVDKLEQFISELG.

The Mg(2+) site is built by E92, D115, L117, and D118. Substrate contacts are provided by residues 118–121 (DGSS), N211, Y244, 262–264 (YLY), and K274. E280 contributes to the Mg(2+) binding site.

The protein belongs to the FBPase class 1 family. As to quaternary structure, homotetramer. Mg(2+) is required as a cofactor.

It localises to the cytoplasm. The catalysed reaction is beta-D-fructose 1,6-bisphosphate + H2O = beta-D-fructose 6-phosphate + phosphate. The protein operates within carbohydrate biosynthesis; gluconeogenesis. This chain is Fructose-1,6-bisphosphatase class 1, found in Hahella chejuensis (strain KCTC 2396).